Reading from the N-terminus, the 649-residue chain is Golgin subfamily A member 6-like protein 26 (649 aa).

Disordered stretches follow at residues 1-94 (MWPQ…HQEA), 300-330 (QEEK…RQEE), 358-440 (EKMH…EMWR), 455-572 (KEKM…REQE), and 584-620 (EQEE…MRRQ). Over residues 10–23 (HPHLPTHPHLPTHP) the composition is skewed to low complexity. The segment covering 25–46 (MSKETRQSKLAEAKEQLTDHHP) has biased composition (basic and acidic residues). Polar residues-rich tracts occupy residues 47–57 (QTNPSVGTAAS) and 65–77 (NNGT…TSGG). Residues 80 to 94 (SPEDEQKASHQHQEA) are compositionally biased toward basic and acidic residues. Positions 151 to 644 (LEQALSAVAT…EEKMQEHQEH (494 aa)) form a coiled coil.

This sequence belongs to the GOLGA6 family.

The protein is Golgin subfamily A member 6-like protein 26 (GOLGA6L26) of Homo sapiens (Human).